A 37-amino-acid polypeptide reads, in one-letter code: Kappa-actitoxin-Bcs3b (37 aa).

A ShKT domain is found at 2–37; sequence CKDGFPTATCQHAKLVGNCKNSQKYRANCAKTCGPC. Cystine bridges form between cysteine 2–cysteine 37, cysteine 11–cysteine 30, and cysteine 20–cysteine 34. The segment at 25-26 is crucial for binding to potassium channels; it reads KY.

Belongs to the sea anemone type 1 potassium channel toxin family. Type 1b subfamily.

It localises to the secreted. It is found in the nematocyst. Inhibits voltage-gated potassium channels (IC(50)=14.42 nM for rKCNA1/Kv1.1, IC(50)=80.4 nM for rKCNA2/Kv1.2, IC(50)=7.76 nM for rKCNA6/Kv1.6, IC(50)=13.12 nM for hKCNA3/Kv1.3, and IC(50)=49.14 nM for insect Shaker IR). Binds the Shaker IR channels in a voltage-independent manner. The chain is Kappa-actitoxin-Bcs3b from Bunodosoma caissarum (Sea anemone).